The sequence spans 440 residues: Xylose isomerase (440 aa).

Residues His100 and Asp103 contribute to the active site. 7 residues coordinate Mg(2+): Glu231, Glu267, His270, Asp295, Asp306, Asp308, and Asp338.

It belongs to the xylose isomerase family. As to quaternary structure, homotetramer. It depends on Mg(2+) as a cofactor.

Its subcellular location is the cytoplasm. The enzyme catalyses alpha-D-xylose = alpha-D-xylulofuranose. This chain is Xylose isomerase, found in Burkholderia orbicola (strain MC0-3).